The chain runs to 490 residues: Cardiolipin synthase 1 (490 aa).

2 helical membrane-spanning segments follow: residues 9 to 29 (ILTI…FVII) and 42 to 62 (WAWL…YLFL). PLD phosphodiesterase domains follow at residues 225–252 (MNNR…GDDY) and 403–430 (QNGF…DFRS). Active-site residues include H230, K232, D237, H408, K410, and D415.

Belongs to the phospholipase D family. Cardiolipin synthase subfamily.

The protein resides in the cell membrane. It catalyses the reaction 2 a 1,2-diacyl-sn-glycero-3-phospho-(1'-sn-glycerol) = a cardiolipin + glycerol. Its function is as follows. Catalyzes the reversible phosphatidyl group transfer from one phosphatidylglycerol molecule to another to form cardiolipin (CL) (diphosphatidylglycerol) and glycerol. This is Cardiolipin synthase 1 (cls1) from Staphylococcus epidermidis (strain ATCC 12228 / FDA PCI 1200).